Consider the following 668-residue polypeptide: Packaging protein UL32 homolog (668 aa).

The segment covering 1 to 10 has biased composition (polar residues); that stretch reads MNPSTHVSSN. The segment at 1–35 is disordered; it reads MNPSTHVSSNGPTTPPHGPHTTFLPPTSPAPSTSS. The segment covering 19–35 has biased composition (low complexity); it reads PHTTFLPPTSPAPSTSS. Residues cysteine 200, cysteine 203, histidine 276, and cysteine 282 each contribute to the Zn(2+) site. The interval 200-282 is zinc finger 1; the sequence is CNLCAIISIC…FHLHFFINRC (83 aa). Basic and acidic residues-rich tracts occupy residues 392–401 and 410–419; these read SEREDARMMM and GEKGGDDPGR. Residues 392–430 form a disordered region; the sequence is SEREDARMMMEEEEDEEGGEKGGDDPGRHNGGGTSGGFS. Cysteine 459, cysteine 462, histidine 567, and cysteine 574 together coordinate Zn(2+). The zinc finger 2 stretch occupies residues 459 to 574; sequence CLLCELMACS…YKHFFCDPQC (116 aa).

Belongs to the herpesviridae UL32 protein family.

The protein resides in the host cytoplasm. The protein localises to the host nucleus. In terms of biological role, plays a role in efficient localization of neo-synthesized capsids to nuclear replication compartments, thereby controlling cleavage and packaging of virus genomic DNA. This Homo sapiens (Human) protein is Packaging protein UL32 homolog (UL52).